The chain runs to 526 residues: ATP synthase subunit alpha 2 (526 aa).

171-178 lines the ATP pocket; the sequence is GDRQTGKT.

The protein belongs to the ATPase alpha/beta chains family. F-type ATPases have 2 components, CF(1) - the catalytic core - and CF(0) - the membrane proton channel. CF(1) has five subunits: alpha(3), beta(3), gamma(1), delta(1), epsilon(1). CF(0) has four main subunits: a(1), b(1), b'(1) and c(9-12).

It localises to the cell inner membrane. The enzyme catalyses ATP + H2O + 4 H(+)(in) = ADP + phosphate + 5 H(+)(out). Produces ATP from ADP in the presence of a proton gradient across the membrane. The alpha chain is a regulatory subunit. The sequence is that of ATP synthase subunit alpha 2 from Chlorobium luteolum (strain DSM 273 / BCRC 81028 / 2530) (Pelodictyon luteolum).